The chain runs to 636 residues: Capsid vertex component 2 (636 aa).

Residues Met-1–Arg-48 form an interaction with major capsid protein/MCP region. Positions Asp-97 to Ser-125 are disordered.

Belongs to the herpesviridae CVC2 protein family. As to quaternary structure, heterodimerizes with CVC1. Interacts with major capsid protein/MCP and triplex capsid protein 1/TRX1 at the pentamer vertices. Interacts with the large tegument protein/LTP.

The protein localises to the virion. The protein resides in the host nucleus. Its function is as follows. Capsid vertex-specific component that plays a role during viral DNA encapsidation, assuring correct genome cleavage and presumably stabilizing capsids that contain full-length viral genomes. Participates in the interaction between the capsid and the tegument through interaction with the large tegument protein/LTP. This Homo sapiens (Human) protein is Capsid vertex component 2.